A 183-amino-acid chain; its full sequence is Threonylcarbamoyl-AMP synthase (183 aa).

Positions 1–183 (MNREQIANAL…LRTNQLFRQG (183 aa)) constitute a YrdC-like domain.

This sequence belongs to the SUA5 family. TsaC subfamily.

Its subcellular location is the cytoplasm. It catalyses the reaction L-threonine + hydrogencarbonate + ATP = L-threonylcarbamoyladenylate + diphosphate + H2O. Required for the formation of a threonylcarbamoyl group on adenosine at position 37 (t(6)A37) in tRNAs that read codons beginning with adenine. Catalyzes the conversion of L-threonine, HCO(3)(-)/CO(2) and ATP to give threonylcarbamoyl-AMP (TC-AMP) as the acyladenylate intermediate, with the release of diphosphate. This chain is Threonylcarbamoyl-AMP synthase, found in Haemophilus influenzae (strain PittEE).